An 81-amino-acid polypeptide reads, in one-letter code: uncharacterized protein (81 aa).

A disordered region spans residues 55–81; that stretch reads LDKRNSNNKIEKSENTGENHDNNQDQK.

This is an uncharacterized protein from Thermoproteus tenax virus 1 (strain KRA1) (TTV1).